A 434-amino-acid polypeptide reads, in one-letter code: Protein phosphatase 2C 56 (434 aa).

The 295-residue stretch at 128–422 (LYGFTSICGR…DNISVVVVDL (295 aa)) folds into the PPM-type phosphatase domain. Mg(2+) is bound by residues aspartate 177, aspartate 261, serine 262, aspartate 347, and aspartate 413. Residues 423 to 427 (KPRRK) carry the Nuclear localization signal motif.

This sequence belongs to the PP2C family. In terms of assembly, interacts with SPK1, ATHB-6, CIPK15/PKS3, GPX3, SRK2E/OST1, SRK2D, SRK2I, SCAR1, SCAR2, SCAR3 and SCARL. Binds to the PA released by the phospholipase D alpha 1 (PLDALPHA1) in response to ABA during the stomatal closure regulation. Interacts with ABA-bounded PYR1, PYL1, PYL2, PYL3, PYL4, PYL5, PYL6, PYL7, PYL8, PYL9, PYL10, and with free PYL2, PYL3, PYL4 and PYL13. Binds to RPL12B, CPK21 and CPK23. Binds to MAPKKK18. Interacts with KIN10. Interacts with phosphorylated PYL8/RCAR3. Mg(2+) is required as a cofactor. Mn(2+) serves as cofactor. In terms of tissue distribution, expressed in seeds and seedlings. In roots, confined to lateral root caps and columella cells.

It is found in the nucleus. Its subcellular location is the cytoplasm. The protein localises to the cell membrane. It catalyses the reaction O-phospho-L-seryl-[protein] + H2O = L-seryl-[protein] + phosphate. The enzyme catalyses O-phospho-L-threonyl-[protein] + H2O = L-threonyl-[protein] + phosphate. Phosphatase activity repressed by oxidized GPX3 and phosphatidic acid (PA). PA is produced by PLD alpha 1 in response to ABA. Repressed by PYR/PYL/RCAR ABA receptors in an ABA-dependent manner. Functionally, key component and repressor of the abscisic acid (ABA) signaling pathway that regulates numerous ABA responses, such as stomatal closure, osmotic water permeability of the plasma membrane (Pos), drought-induced resistance and rhizogenesis, response to glucose, high light stress, seed germination and inhibition of vegetative growth. During the stomatal closure regulation, modulates the inward calcium-channel permeability as well as the actin reorganization in guard cells in response to ABA. Involved in the resistance to the bacterial pathogen Pseudomonas syringae pv. tomato. Controls negatively fibrillin expression that is involved in mediating ABA-induced photoprotection. May be involved in ABA content regulation. Plays a role in the Pro accumulation in response to reduced water availability (low water potential). Required for the ABA negative regulation of the ethylene-induced hyponastic growth. Involved in acquired thermotolerance of root growth and seedling survival. Activates/represses SRK2E/OST1 in response to ABA-dependent stimuli, especially in stomata closure regulation involving SLAC1. Represses MAPKKK18 activity and promotes MAPKKK18 degradation by the proteasome pathway upon abscisic acid (ABA) treatment. Represses KIN10 activity by the specific dephosphorylation of its T-loop Thr-198, leading to a poststress inactivation of SnRK1 signaling. Restricts MAPKKK20 activity by dephosphorylation. The sequence is that of Protein phosphatase 2C 56 from Arabidopsis thaliana (Mouse-ear cress).